The sequence spans 690 residues: Potassium-transporting ATPase ATP-binding subunit (690 aa).

Residues 1-23 (MNSTSTVRQPGGPRQQRRHTPKA) are disordered. The next 4 helical transmembrane spans lie at 44-64 (IMVK…TGML), 78-98 (AMFN…ANFA), 233-253 (IALT…VATL), and 268-288 (LLIA…LSAI). The active-site 4-aspartylphosphate intermediate is the Asp-321. ATP is bound by residues Asp-358, Glu-362, 389 to 396 (FSARTRMS), and Lys-408. Asp-531 and Asp-535 together coordinate Mg(2+). 3 helical membrane-spanning segments follow: residues 601 to 621 (FAII…IMDL), 627 to 647 (AVLS…PLAL), and 665 to 685 (ILVY…LIDL).

It belongs to the cation transport ATPase (P-type) (TC 3.A.3) family. Type IA subfamily. As to quaternary structure, the system is composed of three essential subunits: KdpA, KdpB and KdpC.

It localises to the cell inner membrane. The catalysed reaction is K(+)(out) + ATP + H2O = K(+)(in) + ADP + phosphate + H(+). In terms of biological role, part of the high-affinity ATP-driven potassium transport (or Kdp) system, which catalyzes the hydrolysis of ATP coupled with the electrogenic transport of potassium into the cytoplasm. This subunit is responsible for energy coupling to the transport system and for the release of the potassium ions to the cytoplasm. The protein is Potassium-transporting ATPase ATP-binding subunit of Synechocystis sp. (strain ATCC 27184 / PCC 6803 / Kazusa).